A 433-amino-acid polypeptide reads, in one-letter code: Steroid C26-monooxygenase (433 aa).

G202 serves as a coordination point for substrate. C377 is a binding site for heme.

Belongs to the cytochrome P450 family. It depends on heme as a cofactor.

The enzyme catalyses cholest-4-en-3-one + 6 reduced [2Fe-2S]-[ferredoxin] + 3 O2 + 5 H(+) = (25S)-3-oxocholest-4-en-26-oate + 6 oxidized [2Fe-2S]-[ferredoxin] + 4 H2O. Its pathway is steroid metabolism; cholesterol degradation. In terms of biological role, involved in the utilization of cholesterol as the sole carbon and energy source by degrading the side chain during infection. Primarily catalyzes the sequential oxidation of the terminal methyl of cholest-4-en-3-one into (25S)-26-hydroxycholest-4-en-3-one (alcohol), (25S)-26-oxocholest-4-en-3-one (aldehyde), to finally yield the carboxylic acid (25S)-3-oxocholest-4-en-26-oate. Also able to sequentially oxidize cholesterol itself, not only cholest-4-en-3-one. This is Steroid C26-monooxygenase (cyp125) from Mycobacterium bovis (strain ATCC BAA-935 / AF2122/97).